The following is a 164-amino-acid chain: NADH-quinone oxidoreductase subunit I (164 aa).

2 4Fe-4S ferredoxin-type domains span residues 55-85 and 95-124; these read LRRY…IDAE and TRYD…EGPN. Positions 65, 68, 71, 75, 104, 107, 110, and 114 each coordinate [4Fe-4S] cluster.

It belongs to the complex I 23 kDa subunit family. As to quaternary structure, NDH-1 is composed of 14 different subunits. Subunits NuoA, H, J, K, L, M, N constitute the membrane sector of the complex. Requires [4Fe-4S] cluster as cofactor.

It localises to the cell inner membrane. It carries out the reaction a quinone + NADH + 5 H(+)(in) = a quinol + NAD(+) + 4 H(+)(out). Functionally, NDH-1 shuttles electrons from NADH, via FMN and iron-sulfur (Fe-S) centers, to quinones in the respiratory chain. The immediate electron acceptor for the enzyme in this species is believed to be ubiquinone. Couples the redox reaction to proton translocation (for every two electrons transferred, four hydrogen ions are translocated across the cytoplasmic membrane), and thus conserves the redox energy in a proton gradient. In Ruegeria sp. (strain TM1040) (Silicibacter sp.), this protein is NADH-quinone oxidoreductase subunit I.